A 329-amino-acid chain; its full sequence is uncharacterized protein (329 aa).

Disordered regions lie at residues arginine 16–cysteine 41 and leucine 183–proline 229. Over residues serine 213–proline 229 the composition is skewed to basic and acidic residues.

In terms of tissue distribution, expressed in testis and epididymis. Expressed at lower levels in ovary.

Its function is as follows. Dispensable for normal development and fertility. This is an uncharacterized protein from Mus musculus (Mouse).